A 344-amino-acid polypeptide reads, in one-letter code: NAD-dependent alcohol dehydrogenase (344 aa).

Residues C38, H66, D96, C99, C102, C110, and C152 each contribute to the Zn(2+) site.

This sequence belongs to the zinc-containing alcohol dehydrogenase family. In terms of assembly, homodimer and homotetramer. It depends on Zn(2+) as a cofactor.

The catalysed reaction is a primary alcohol + NAD(+) = an aldehyde + NADH + H(+). It catalyses the reaction a secondary alcohol + NAD(+) = a ketone + NADH + H(+). In Sulfolobus acidocaldarius (strain ATCC 33909 / DSM 639 / JCM 8929 / NBRC 15157 / NCIMB 11770), this protein is NAD-dependent alcohol dehydrogenase (adh).